The following is a 447-amino-acid chain: Signal recognition particle 54 kDa protein (447 aa).

GTP is bound by residues 103–110 (GVQGSGKT), 185–189 (DTAGR), and 245–248 (TKMD).

Belongs to the GTP-binding SRP family. SRP54 subfamily. As to quaternary structure, part of the signal recognition particle protein translocation system, which is composed of SRP and FtsY. Archaeal SRP consists of a 7S RNA molecule of 300 nucleotides and two protein subunits: SRP54 and SRP19.

Its subcellular location is the cytoplasm. The catalysed reaction is GTP + H2O = GDP + phosphate + H(+). Involved in targeting and insertion of nascent membrane proteins into the cytoplasmic membrane. Binds to the hydrophobic signal sequence of the ribosome-nascent chain (RNC) as it emerges from the ribosomes. The SRP-RNC complex is then targeted to the cytoplasmic membrane where it interacts with the SRP receptor FtsY. In Saccharolobus islandicus (strain Y.N.15.51 / Yellowstone #2) (Sulfolobus islandicus), this protein is Signal recognition particle 54 kDa protein.